Reading from the N-terminus, the 75-residue chain is ATP synthase subunit epsilon, mitochondrial (75 aa).

The N-terminal 9 residues, 1 to 9 (MIRRSCALL), are a transit peptide targeting the mitochondrion.

The protein belongs to the eukaryotic ATPase epsilon family. F-type ATPases have 2 components, F(1) - the catalytic core - and F(o) - the membrane proton channel. F(1) has five subunits: alpha(3), beta(3), gamma(1), delta(1), epsilon(1), plus the additional subunit P18 (Tb427.05.1710) that is not present in F(1)F(o) ATP synthase from metazoa. Subunit P18 (Tb927.5.1710) interacts with the alpha subunit with a 1:1 stoichiometry; the interaction is direct. Subunit gamma is part of the central stalk. F(o) has three main subunits: a, b and c. The trypanosomal ATPase complex contains additional subunits that are not present in the F(1)F(o) ATP synthase from metazoa.

The protein localises to the mitochondrion. It localises to the mitochondrion inner membrane. Its function is as follows. Mitochondrial membrane ATP synthase (F(1)F(o) ATP synthase) produces ATP from ADP in the presence of a proton gradient across the membrane which is generated by electron transport complexes of the respiratory chain. F-type ATPases consist of two structural domains, F(1) - containing the extramembraneous catalytic core, and F(o) - containing the membrane proton channel, linked together by a central stalk and a peripheral stalk. During catalysis, ATP synthesis in the catalytic domain of F(1) is coupled via a rotary mechanism of the central stalk subunits to proton translocation. Subunits alpha and beta form the catalytic core in F(1). Rotation of the central stalk against the surrounding alpha(3)beta(3) subunits leads to hydrolysis of ATP in three separate catalytic sites on the beta subunits. Contrary to the procyclic, insect form that requires F(1)F(o) ATP synthase for ATP synthesis, the bloodstream form relies on ATP hydrolysis by F(1)F(o) ATP synthase to maintain its mitochondrial membrane potential. The sequence is that of ATP synthase subunit epsilon, mitochondrial from Trypanosoma brucei brucei.